A 201-amino-acid polypeptide reads, in one-letter code: Retinol binding protein 4 (201 aa).

A signal peptide spans Met1 to Ala18. 3 disulfide bridges follow: Cys22–Cys178, Cys88–Cys192, and Cys138–Cys147. Substrate is bound at residue Gln116. Arg139 carries the post-translational modification Omega-N-methylarginine.

This sequence belongs to the calycin superfamily. Lipocalin family. Interacts with TTR. Interaction with TTR prevents its loss by filtration through the kidney glomeruli. Interacts with STRA6. As to expression, highly expressed in liver. Also expressed in adipose tissue. Expressed by endometrium from days 16-25 and by unattached chorioallantois from days 30-36 during pregnancy.

It localises to the secreted. Retinol-binding protein that mediates retinol transport in blood plasma. Delivers retinol from the liver stores to the peripheral tissues. Transfers the bound all-trans retinol to STRA6, that then facilitates retinol transport across the cell membrane. This Felis catus (Cat) protein is Retinol binding protein 4.